Here is a 304-residue protein sequence, read N- to C-terminus: Galactose 1-dehydrogenase (304 aa).

Belongs to the Gfo/Idh/MocA family. Homodimer.

The protein resides in the cytoplasm. The catalysed reaction is D-galactose + NAD(+) = D-galactono-1,4-lactone + NADH + H(+). It participates in carbohydrate metabolism; galactose metabolism. Functionally, catalyzes the dehydrogenation of D-galactose by either NAD(+) or NADP(+). Oxidizes following sugars in decreasing order: D-fucose &gt; D-galactose &gt; L-arabinose &gt; 2-deoxy-D-galactose &gt;&gt; 4-deoxy-D-galactose &gt; 2-deoxy-2-amino-D-galactose. This Pseudomonas fluorescens protein is Galactose 1-dehydrogenase (gal).